A 338-amino-acid polypeptide reads, in one-letter code: Phenylalanine--tRNA ligase alpha subunit (338 aa).

Glutamate 253 contacts Mg(2+).

It belongs to the class-II aminoacyl-tRNA synthetase family. Phe-tRNA synthetase alpha subunit type 1 subfamily. In terms of assembly, tetramer of two alpha and two beta subunits. Mg(2+) is required as a cofactor.

It is found in the cytoplasm. It catalyses the reaction tRNA(Phe) + L-phenylalanine + ATP = L-phenylalanyl-tRNA(Phe) + AMP + diphosphate + H(+). This Pelobacter propionicus (strain DSM 2379 / NBRC 103807 / OttBd1) protein is Phenylalanine--tRNA ligase alpha subunit.